A 199-amino-acid polypeptide reads, in one-letter code: Recombination protein RecR (199 aa).

The C4-type zinc-finger motif lies at 57–72 (CQSCRTYTEETLCPIC). The 96-residue stretch at 81 to 176 (STICVVETPA…MISRIAHGVP (96 aa)) folds into the Toprim domain.

Belongs to the RecR family.

Its function is as follows. May play a role in DNA repair. It seems to be involved in an RecBC-independent recombinational process of DNA repair. It may act with RecF and RecO. The polypeptide is Recombination protein RecR (Shewanella baltica (strain OS195)).